A 161-amino-acid polypeptide reads, in one-letter code: MSKIAGKRLVYFPNITFTLCRGLNLQPKFAVFRVPLHVNKFDVRDYLQHVYNLKVVSVKSRIYQGKLFRNQLGQVKRPQSEKRVIVEMEEPFVYPNAPNDLKDWQEGELLPDGSNVKTLSRYPKVLEQVDMKRVNEELSKLQDKQILESQQKIARLLKKKY.

A mitochondrion-targeting transit peptide spans Met-1–Val-34.

This sequence belongs to the universal ribosomal protein uL23 family. In terms of assembly, component of the mitochondrial large ribosomal subunit (mt-LSU). Mature yeast 74S mitochondrial ribosomes consist of a small (37S) and a large (54S) subunit. The 37S small subunit contains a 15S ribosomal RNA (15S mt-rRNA) and at least 32 different proteins. The 54S large subunit contains a 21S rRNA (21S mt-rRNA) and at least 45 different proteins. uL23m forms the wall of the exit tunnel. Interacts with the C-terminus of OXA1.

Its subcellular location is the mitochondrion. Functionally, component of the mitochondrial ribosome (mitoribosome), a dedicated translation machinery responsible for the synthesis of mitochondrial genome-encoded proteins, including at least some of the essential transmembrane subunits of the mitochondrial respiratory chain. The mitoribosomes are attached to the mitochondrial inner membrane and translation products are cotranslationally integrated into the membrane. The chain is Large ribosomal subunit protein uL23m (mrp20) from Schizosaccharomyces pombe (strain 972 / ATCC 24843) (Fission yeast).